Consider the following 4699-residue polypeptide: MFTMKIKKYVTPVKRKAFTILQWISLLCSLWLIPTVQSKADEKHTATLEYRLENQLQDLYRFSHSVYNVTIPENSLGKTYAKGVLHERLAGLRVGLNAEVKYRIISGDKEKLFKAEEKLVGDFAFLAIRTRTNNVVLNREKTEEYVIRVKAHVHLHDRNVSSYETEANIHIKVLDRNDLSPLFYPTQYTVVIPEDTPKYQSILKVTADDADLGINGEIYYSLLMDSEYFAIHPTTGEITLLQQLQYAENSHFELTVVAYDRGSWVNHQNHQASKTKVSISVKQVNFYAPEIFTKTFSSVTPTSNPLIYGIVRVNDKDTGINGNIGRLEIVDGNPDGTFLLKAAETKDEYYIELNQFAHLNQQHFIYNLTLLAEDLGTPRRFAYKSVPIQIKPESKNIPIFTQEIYEVSIPETAPINMPVIRLKVSDPDLGKNALVYLEIVGGNEGDEFRINPDSGMLYTAKQLDAEKKSSYTLTVSAIDQANVGSRKQSSAKVKISVQDMNDNDPIFENVNKVISINENNLAGSFVVKLTAKDRDSGENSYISYSIANLNAVPFEIDHFSGIVKTTSLLDFETMKRNYELIIRASDWGLPYRRQTEIKLSIVVKDINDNRPQFERVNCYGKVTKSAPMGTEVFVTSAIDFDAGDIISYRLSDGNEDGCFNLDPTSGSLSISCDLKKTTLTNRILKVSATDGTHFSDDLIINVHLMPEDLGGDSSILHGFGSFECRETGVARRLAETLSLAEKNNVKSASPSVFSDLSLTPSRYGQNVHRPEFVNFPQELSINESVQLGETVAWIEAKDRDLGYNGKLVFAISDGDYDSVFRIDPDRGELQIIGYLDRERQNEYVLNITVYDLGNPTKSTSKMLPITILDVNDNRPVIQKTLATFRLTESARIGTVVHCLHATDADSGINAQVTYALSVECSDFTVNATTGCLRLNKPLDREKQDNYALHITAKDGGSPVLSSEALVYVLVDDVNDNAPVFGVQEYIFKVREDLPRGTVLAVIEAVDEDIGPNAEIQFSLKEETQDEELFRIDKHTGAIRTQGYLDYENKQVHNLIVSAIDGGDPSLTSDMSIVIMIIDVNENRFAPEFDDFVYEGKVKENKPKGTFVMNVTARDMDTVDLNSKITYSITGGDGLGIFAVNDQGSITSLSQLDAETKNFYWLTLCAQDCAIVPLSNCVEVYIQVENENDNIPLTDKPVYYVNVTEASVENVEIITLKAFDPDIDPTQTITYNIVSGNLVGYFEIDSKTGVIKTTERKLDRENQAEHILEVAISDNGSPVLSSTSRIVVSVLDINDNSPEFDQRVYKVQVPSSATVNQSIFQVHAIDSDSGENGRITYSIKSGKGKNKFRIDSQRGHIHIAKPLDSDNEFEIHIKAEDNGIPKKSQTARVNIVVVPVNPNSQNAPLIVRKTSENVVDLTENDKPGFLVTQILAVDDDNDQLWYNISNGNDDNTFYIGQDNGNILLSKYLDYETQQSYNLTISVTDGTFTAFTNLLVQVIDINDNPPQFAKDVYHVNISENIEEESVIMQLHATDRDEDKKLFYHLHATQDPSSLALFRIDSISGNVIVTQRLDFEKTAQHILIVFVKDQGAPGKRNYAKIIVNVHDHNDHHPEFTAKIIQSKVPESAAIGSKLAEVRAIDRDSGHNAEIQYSIITGNVGSVFEIDPTFGIITLAGNLNINKIQEYMLQVKAVDLGNPPLSSQIPVHIIVTMSENDPPKFPTNNIAIEIFENLPIGTFVTQVTARSSSSIFFNIISGNINESFRINPSTGVIVINGNIDYESIKVFNLTVKGTNMAAESSCQNIIIHILDANDNIPYFVQNEYVGALPESAAIGSYVLKVHDSSKDHLTLQVKDADVGVNGMVEYHIVDDLAKNFFKIDSTTGAIELLRQLDYETNAGYTFDVTVSDMGKPKLHSTTTAHVTIRVINVNDCPPVFNERELNVTLFLPTFENVFVRQVSAKDADNDTLRFDIVDGNTNECFQIEKYTGIITTRNFEILNNENDRDYALHVRASDGIFSAILIVKIKVLSAIDSNFAFQRESYRFSAFENNTKVATIGLVNVIGNTLDENVEYRILNPTQLFDIGISSGALKTTGVIFDREVKDLYRLFVEAKSMLYDGMNSNVRRAVTSIDISVLDVNDNCPLFVNMPYYATVSIDDPKGTIIMQVKAIDLDSAENGEVRYELKKGNGELFKLDRKSGELSIKQHVEGHNRNYELTVAAYDGAITPCSSEAPLQVKVIDRSMPVFEKQFYTVSVKEDVEMYSALSVSIEAESPLGRSLIYTISSESQSFEIDYNTGSIFVVNELDYEKISSHDVSIRATDSLSGVYAEVVLSVSIMDVNDCYPEIESDIYNLTIPENASFGTQILKINATDNDSGANAKLSYYIESINGQNNSELFYIDVTDGNLYLKTPLDYEQIKYHHIVVNVKDHGSPSLSSRSNVFITVKDLNDNAPCFVEPSYFTKVSVAAVRGQFVALPKAYDKDISDTDSLEYKIVYGNELQTYSIDKLTGVISLQNMLNFTDKSSTVLNISVSDGVHTAYARLKISLLPENVYSPLFDQSTYEAQVPENLLHGHNIITVKASDGDFGTYANLYYEIVSEEMKKIFLIDQTTGVITSKVTFDREKKDEYVVLLKVSDGGGKFGFASLKVIVVDVNDNVPYFLLKEYKMVVSTTVEANQTILTVKAKDDDIVDNGSVHFQIVQKSNDKAVKDVIEINEKTGDIVFKSKAESYGVNSYQFFVRASDRGEPQFHSEVPVSIEIIETDANIPTFEKSSVLLKIIESTPPGTVLTKLHMIGNYTFKFSIAADQDHFMISDSGELILQQTLDREQQESHNLIVVAETSTVPVFFAYADVLIDVRDENDNYPKFDNTFYSASVAENSEKVISLVKVSATDADTGPNGDIRYYLESDTENIQNIFDIDIYSGWITLLTSLDREVQSEYNFKVIAADNGHPKHDAKVPVTIKIVDYNDNAPVFKLPIEGLSVFENALPGTVLINLLLIDPDIEKQEMDFFIVSGDKQAQFQIGKSGELFIAKPLDREQLMFYNLSIIATDGKFTAKANVEIDVKDINDNTPYCLKPRYHISTNESISIGTTLVEVKAIDFDFQSKLRFYLSGKGADDFSIGKESGILKVASALDRETTPKYKLVAHVQDGKDFTQECFSEIIITVNDINDNMPIFSMAQYRVSVPEDAQLNTLITKVHAMDKDFGVNRQIKYSLMGENHDYFKISKSTGIIRLHKSLDRETISLFNLTVKAEDCGVPKLHSIATVAVNILDINDNPPEFSMRQYSCKILENATHGTEVCKVYATSIDIGVNADIHYFIMSGNEQGKFKMDSTTGDLVLNATLDYEMSKFYFLTIQAIDGGTPPLSNNAYVNISILDINDNSPTFLQNLYRINVNEDIFVGSKILDVKATDEDSDVNGLVTYNIERGDNIGQFSIDPKNGTISVSRPLDRETISHYTLEIQACDQGDPQRCNSVPININILDTNDNAPIFSSSNYSVVLQENRLLGYVFLTFKISDADETPNTTPYTFDIRSGNEGGLFRLEQDGSLRTASRFNHNLQDEFVIQVRVFDNGTPPLYSDAWVVVKIIEESQYPPIVTPLEVTINSFEDDFSGAFIGKVHASDQDKYDELNFSLVSGPDDMYQSSKLFNISNNTGKIYAISNLDIGLYKLNVSVSDGKFHVFSIVKINVELVTNDMLKESVVIRFRRISASEFLLSHRKTFMRSIRNIMRCRQKDVILITLQSDYQKASQHAVGNRRARSIDSDLNVVFAVRKQQIIPDSDEFFTSDEIRQTLIDKKNEIENETNLVVEDVLPSTCQSNKNDCVHGECKQILQILKNNVTTTFTDVISFAAPSYIPVNTCVCRPGFDGKHCKETVNACSTDPCSPQRICMPSGSALGYQCVCPKGFSGTYCERKSSKCSNESCDMGLFTAVSFGGKSYAHYKINKVKAKFTLENGFSYSLQIRTVQQTGTLLYASGKVDYNILEIINGAVQYRFDLGSGEGVISVSSINISDGEWHQISLERSLNSAKVMVDNKHVSHGSAPGVNGILNIQSNDIFVGAEVRPHPSIIGYEDIQRGFIGCMANIKIAKESLPLYISGGSTIAALKRFTNVEFKCDPSNVLVRLGICGSQPCANSGICKELDTDVFECACQPRYSGKHCEIDLDPCSSGPCLFGGRCDYHGPNNYSCTCPIHLSGKRCEYGKFCTPNPCKNGGICEEGDGISHCMCRGYTGPTCEIDVDECENQPCGNGATCINEPGSFRCICPSYLTGASCGDPLYSNSISTKLKNFSIEHISGIISGVAVVLVIISCVLCCVVLKRSSSSKRRNRLEKDKNKSSYKEANLNSLVDKDNYCKPNVKLSNLEVNQRPISYTAVPNDNLVLSNRNFVNNLDILRSYGSAGDELENVPFEYQKVNRNKQHVNINSCHSTDADNAYKQEWCEQMHLRTFSENKLNNELKRDFGPSVSRFSTGKLIQVEMPNVCHSSSANFVDYSALANGQYHWDCSDWVRKSHNPLPDITEVPGAEIADSSSLHSNDSNESKSKKAFFVHREDGDVDPTRDIAALNEDIGSEYLDSEAESCLEPFMLPRSSNQPLSRLSSFNNIENEDYKSNTVPLPSKVSHSCKVYLRHPDSYLPTMHFPSETDGESSMTEGPISRMEIKTRRTISENSEEAYLFPCTVGEIGSNSNISVRLCEIEDSELEEFLPQQQTNN.

The N-terminal stretch at 1–38 (MFTMKIKKYVTPVKRKAFTILQWISLLCSLWLIPTVQS) is a signal peptide. The Extracellular segment spans residues 39–4285 (KADEKHTATL…KNFSIEHISG (4247 aa)). 34 consecutive Cadherin domains span residues 63–183 (SHSV…SPLF), 184–291 (YPTQ…APEI), 288–400 (APEI…IPIF), 401–507 (TQEI…DPIF), 508–613 (ENVN…RPQF), 614–716 (ERVN…SSIL), 773–877 (VNFP…RPVI), 878–980 (QKTL…APVF), 981–1088 (GVQE…APEF), 1089–1198 (DDFV…KPVY), 1194–1299 (DKPV…SPEF), 1300–1405 (DQRV…APLI), 1408–1506 (KTSE…PPQF), 1507–1612 (AKDV…HPEF), 1613–1717 (TAKI…PPKF), 1718–1815 (PTNN…IPYF), 1816–1932 (VQNE…PPVF), 1933–2033 (NERE…NFAF), 2034–2140 (QRES…CPLF), 2141–2241 (VNMP…MPVF), 2242–2341 (EKQF…YPEI), 2342–2449 (ESDI…APCF), 2450–2551 (VEPS…SPLF), 2552–2654 (DQST…VPYF), 2655–2763 (LLKE…IPTF), 2764–2860 (EKSS…YPKF), 2861–2967 (DNTF…APVF), 2968–3072 (KLPI…KPRY), 3068–3169 (LKPR…MPIF), 3170–3273 (SMAQ…PPEF), 3274–3378 (SMRQ…SPTF), 3379–3483 (LQNL…APIF), 3484–3588 (SSSN…PPIV), and 3589–3696 (TPLE…VIRF). 2 N-linked (GlcNAc...) asparagine glycosylation sites follow: N68 and N159. N367 carries N-linked (GlcNAc...) asparagine glycosylation. Residues N782, N846, and N926 are each glycosylated (N-linked (GlcNAc...) asparagine). 6 N-linked (GlcNAc...) asparagine glycosylation sites follow: N1109, N1201, N1315, N1442, N1476, and N1514. Intrachain disulfides connect C3807/C3819, C3814/C3851, C3853/C3862, C3869/C3880, C3874/C3891, C3893/C3902, C4071/C4105, C4117/C4128, C4122/C4138, C4140/C4149, C4156/C4167, C4161/C4177, C4179/C4188, C4194/C4205, C4199/C4214, C4216/C4224, C4231/C4242, C4236/C4251, and C4253/C4262. The EGF-like 1 domain maps to 3865-3903 (TVNACSTDPCSPQRICMPSGSALGYQCVCPKGFSGTYCE). Residues 3921-4105 (AVSFGGKSYA…KRFTNVEFKC (185 aa)) form the Laminin G-like domain. 4 EGF-like domains span residues 4113-4150 (RLGI…KHCE), 4152-4189 (DLDP…KRCE), 4190-4225 (YGKF…PTCE), and 4227-4263 (DVDE…ASCG). Residues 4286–4306 (IISGVAVVLVIISCVLCCVVL) form a helical membrane-spanning segment. Topologically, residues 4307-4699 (KRSSSSKRRN…EFLPQQQTNN (393 aa)) are cytoplasmic.

In terms of tissue distribution, localizes where basal actin filaments terminate.

The protein resides in the cell membrane. Its function is as follows. Required for the planar polarity of actin filament orientation at the basal side of ovarian follicle cells. Required for proper egg chamber shape and elongation of the egg chamber during oogenesis. Required for the correct planar polarization of Rab10 within the basal follicle cell epithelium and is therefore indirectly involved in the Rab10-dependent remodeling of the basal membrane during egg chamber elongation. This Drosophila melanogaster (Fruit fly) protein is Fat-like cadherin-related tumor suppressor homolog (kug).